The sequence spans 368 residues: tRNA N6-adenosine threonylcarbamoyltransferase (368 aa).

His-108 and His-112 together coordinate Fe cation. Residues 149 to 153, Asp-183, Gly-196, Asp-200, and Asn-301 each bind substrate; that span reads LVSGG. Asp-329 provides a ligand contact to Fe cation.

It belongs to the KAE1 / TsaD family. The cofactor is Fe(2+).

The protein resides in the cytoplasm. It carries out the reaction L-threonylcarbamoyladenylate + adenosine(37) in tRNA = N(6)-L-threonylcarbamoyladenosine(37) in tRNA + AMP + H(+). Its function is as follows. Required for the formation of a threonylcarbamoyl group on adenosine at position 37 (t(6)A37) in tRNAs that read codons beginning with adenine. Is involved in the transfer of the threonylcarbamoyl moiety of threonylcarbamoyl-AMP (TC-AMP) to the N6 group of A37, together with TsaE and TsaB. TsaD likely plays a direct catalytic role in this reaction. The chain is tRNA N6-adenosine threonylcarbamoyltransferase from Paenarthrobacter aurescens (strain TC1).